The primary structure comprises 510 residues: MIWHVQNENFILDSTRIFMKAFHLLLFDGSFIFPECILIFGLILLLMIDSTSDQKDIPWLYFISSTSLVMSITALLFRWREEPMISFSGNFQTNNFNEIFQFLILLCSTLCIPLSVEYIECTEMAIAEFLLFVLTATLGGMFLCGANDLITIFVAPECFSLCSYLLSGYTKKDVRSNEATTKYLLMGGASSSILVHGFSWLYGSSGGEIELQEIVNGLINTQMYNSPGISIALIFITVGIGFKLSPAPSHQWTPDVYEGSPTPVVAFLSVTSKVAASASATRIFDIPFYFSSNEWHLLLEILAILSMILGNLIAITQTSMKRMLAYSSIGQIGYVIIGIIVGDSNGGYASMITYMLFYISMNLGTFACIVLFGLRTGTDNIRDYAGLYTKDPFLALSLALCLLSLGGLPPLAGFFGKLHLFWCGWQAGLYFLVSIGLLTSVVSIYYYLKIIKLLMTGRNQEITPHVRNYRRSPLRSNNSIELSMIVCVIASTIPGISMNPIIAIAQDTLF.

The next 13 membrane-spanning stretches (helical) occupy residues 24-44 (LLLF…GLIL), 57-77 (IPWL…ALLF), 99-119 (IFQF…VEYI), 124-144 (MAIA…MFLC), 149-169 (LITI…LSGY), 183-203 (YLLM…WLYG), 227-247 (PGIS…LSPA), 295-315 (WHLL…LIAI), 323-343 (MLAY…IVGD), 354-374 (YMLF…LFGL), 395-415 (ALSL…AGFF), 418-438 (LHLF…IGLL), and 484-504 (MIVC…IIAI).

The protein belongs to the complex I subunit 2 family. As to quaternary structure, NDH is composed of at least 16 different subunits, 5 of which are encoded in the nucleus.

Its subcellular location is the plastid. It localises to the chloroplast thylakoid membrane. The catalysed reaction is a plastoquinone + NADH + (n+1) H(+)(in) = a plastoquinol + NAD(+) + n H(+)(out). It carries out the reaction a plastoquinone + NADPH + (n+1) H(+)(in) = a plastoquinol + NADP(+) + n H(+)(out). Its function is as follows. NDH shuttles electrons from NAD(P)H:plastoquinone, via FMN and iron-sulfur (Fe-S) centers, to quinones in the photosynthetic chain and possibly in a chloroplast respiratory chain. The immediate electron acceptor for the enzyme in this species is believed to be plastoquinone. Couples the redox reaction to proton translocation, and thus conserves the redox energy in a proton gradient. In Gossypium hirsutum (Upland cotton), this protein is NAD(P)H-quinone oxidoreductase subunit 2 B, chloroplastic.